A 540-amino-acid polypeptide reads, in one-letter code: Telomerase Cajal body protein 1 (540 aa).

Over residues 1–10 the composition is skewed to pro residues; it reads MKTPEAPPLA. Positions 1–126 are disordered; the sequence is MKTPEAPPLA…GEDVEGVSEE (126 aa). Phosphoserine occurs at positions 26, 30, 54, 64, 85, and 90. The span at 116-126 shows a compositional bias: acidic residues; sequence PGEDVEGVSEE. WD repeat units follow at residues 158–197, 213–258, 263–304, 314–355, 356–396, and 402–441; these read QPEN…YNEG, EGDT…LRAS, NHLD…RDCE, GQSG…ALLG, GHQG…HPLW, and VTTN…LESK. Thr-480 carries the phosphothreonine modification. Phosphoserine is present on Ser-482. Positions 520 to 540 are disordered; the sequence is SDAHQEEMGQGRTEGGGGEFT. Over residues 531 to 540 the composition is skewed to gly residues; it reads RTEGGGGEFT.

Belongs to the TCAB1 family. As to quaternary structure, component of the telomerase holoenzyme complex composed of one molecule of TERT, one molecule of WRAP53/TCAB1, two molecules of H/ACA ribonucleoprotein complex subunits DKC1, NOP10, NHP2 and GAR1, and a telomerase RNA template component (TERC). The telomerase holoenzyme complex is associated with TEP1, SMG6/EST1A and POT1. Interacts with the chaperonin-containing T-complex (TRiC) complex; which mediates the folding of WRAP53/TCAB1. Interacts with COIL. Interacts with SMN1. Interacts with RNF8. Interacts with histone H2AX. Phosphorylated at Ser-64 by ATM in response to DNA damage, promoting its interaction with histone H2AX and localization to sites of DNA double-strand breaks.

Its subcellular location is the nucleus. The protein localises to the cajal body. It is found in the chromosome. It localises to the telomere. In terms of biological role, RNA chaperone that plays a key role in telomere maintenance and RNA localization to Cajal bodies. Specifically recognizes and binds the Cajal body box (CAB box) present in both small Cajal body RNAs (scaRNAs) and telomerase RNA template component (TERC). Essential component of the telomerase holoenzyme complex, a ribonucleoprotein complex essential for the replication of chromosome termini that elongates telomeres in most eukaryotes. In the telomerase holoenzyme complex, required to stimulate the catalytic activity of the complex. Acts by specifically binding the CAB box of the TERC RNA and controlling the folding of the CR4/CR5 region of the TERC RNA, a critical step for telomerase activity. In addition, also controls telomerase holoenzyme complex localization to Cajal body. During S phase, required for delivery of TERC to telomeres during S phase and for telomerase activity. In addition to its role in telomere maintenance, also required for Cajal body formation, probably by mediating localization of scaRNAs to Cajal bodies. Also plays a role in DNA repair: phosphorylated by ATM in response to DNA damage and relocalizes to sites of DNA double-strand breaks to promote the repair of DNA double-strand breaks. Acts by recruiting the ubiquitin ligase RNF8 to DNA breaks and promote both homologous recombination (HR) and non-homologous end joining (NHEJ). This is Telomerase Cajal body protein 1 from Bos taurus (Bovine).